Reading from the N-terminus, the 171-residue chain is Glycine cleavage system H protein 4 (171 aa).

One can recognise a Lipoyl-binding domain in the interval 30–112; the sequence is FAEVGITDYA…YEAGWIAVIE (83 aa). Residue Lys-71 is modified to N6-lipoyllysine. A disordered region spans residues 139-171; that stretch reads EKEEEVEVKEEELIETESIEELSEEELGYEENK.

This sequence belongs to the GcvH family. The glycine cleavage system is composed of four proteins: P, T, L and H. The cofactor is (R)-lipoate.

The glycine cleavage system catalyzes the degradation of glycine. The H protein shuttles the methylamine group of glycine from the P protein to the T protein. The polypeptide is Glycine cleavage system H protein 4 (Aquifex aeolicus (strain VF5)).